Here is a 2013-residue protein sequence, read N- to C-terminus: Centrosomal protein 224 (2013 aa).

HEAT repeat units follow at residues 115–153 (TIEA…ALKT), 158–196 (QIPV…WIGK), 200–238 (PLIS…EAAK), 348–386 (TSYV…KSIS), and 427–465 (TKVT…IIGE). The segment at 512 to 557 (PVSSSNKKPAAATGNSKSSSTTTPTGRSSNSSPLPPPPSSSDDIKN) is disordered. Residues 524–543 (TGNSKSSSTTTPTGRSSNSS) show a composition bias toward low complexity. HEAT repeat units lie at residues 724–762 (IQQL…NIGA), 816–854 (VDIS…DANR), 857–895 (QPKL…AMGG), 899–937 (EKHA…SDLG), and 977–1015 (PSEI…QIPL). A disordered region spans residues 1043 to 1109 (KTGQPIPPPS…QQQQRRSILQ (67 aa)). The segment covering 1053–1106 (KTKQSTSSSSSSSSTTSQQSSTPSSPQPIRQQQQQQQQQPTQPQQQQQQQQRRS) has biased composition (low complexity). 3 HEAT repeats span residues 1240–1279 (EYEA…LCLP), 1281–1314 (VLFR…KNGA), and 1317–1353 (CGNL…HIKD). Low complexity-rich tracts occupy residues 1372–1406 (NNNN…QQQQ), 1695–1735 (NRIS…INSS), and 1746–1796 (SNNT…TLST). Disordered stretches follow at residues 1372–1413 (NNNN…SLST), 1695–1809 (NRIS…YSGK), 1905–1949 (NQPS…IAPQ), and 1966–1995 (TLNP…DLNS). Positions 1799-1809 (INKEPRDYSGK) are enriched in basic and acidic residues. Positions 1913–1939 (NNNNNNNNNNNNNNNNNINNNNNNNNN) are enriched in low complexity. Positions 1940–1949 (SGGNENIAPQ) are enriched in polar residues. Positions 1967-1995 (LNPDQNSGSNNNNSHQNSPSTSSSNDLNS) are enriched in low complexity.

It belongs to the TOG/XMAP215 family. As to quaternary structure, interacts with eb1 at the microtubule tip, centrosome and kinetochore. Interacts with lis1 in the cortical attachment of microtubules.

It is found in the cytoplasm. The protein localises to the cytoskeleton. The protein resides in the microtubule organizing center. Its subcellular location is the centrosome. It localises to the chromosome. It is found in the centromere. The protein localises to the kinetochore. In terms of biological role, involved in regulation of microtubule dynamics. Regulates the interaction of microtubules tips with the centrosome and cell cortex. This Dictyostelium discoideum (Social amoeba) protein is Centrosomal protein 224 (mtaA).